The primary structure comprises 658 residues: Glycogen debranching enzyme (658 aa).

The active-site Nucleophile is Asp335. Glu370 functions as the Proton donor in the catalytic mechanism. The span at 457-468 (NDANGEGNRDGT) shows a compositional bias: basic and acidic residues. The segment at 457 to 481 (NDANGEGNRDGTDSNFSNNHGTEGL) is disordered.

Belongs to the glycosyl hydrolase 13 family.

The enzyme catalyses Hydrolysis of (1-&gt;6)-alpha-D-glucosidic linkages to branches with degrees of polymerization of three or four glucose residues in limit dextrin.. It functions in the pathway glycan degradation; glycogen degradation. Its function is as follows. Removes maltotriose and maltotetraose chains that are attached by 1,6-alpha-linkage to the limit dextrin main chain, generating a debranched limit dextrin. The protein is Glycogen debranching enzyme of Pectobacterium atrosepticum (strain SCRI 1043 / ATCC BAA-672) (Erwinia carotovora subsp. atroseptica).